A 502-amino-acid polypeptide reads, in one-letter code: Glycerol kinase (502 aa).

Residue T13 coordinates ADP. Positions 13, 14, and 15 each coordinate ATP. T13 provides a ligand contact to sn-glycerol 3-phosphate. An ADP-binding site is contributed by R17. The sn-glycerol 3-phosphate site is built by R83, E84, Y136, and D246. 5 residues coordinate glycerol: R83, E84, Y136, D246, and Q247. ADP is bound by residues T268 and G311. T268, G311, Q315, and G412 together coordinate ATP. Residues G412 and N416 each contribute to the ADP site.

This sequence belongs to the FGGY kinase family.

The enzyme catalyses glycerol + ATP = sn-glycerol 3-phosphate + ADP + H(+). It functions in the pathway polyol metabolism; glycerol degradation via glycerol kinase pathway; sn-glycerol 3-phosphate from glycerol: step 1/1. Its activity is regulated as follows. Inhibited by fructose 1,6-bisphosphate (FBP). Key enzyme in the regulation of glycerol uptake and metabolism. Catalyzes the phosphorylation of glycerol to yield sn-glycerol 3-phosphate. The chain is Glycerol kinase from Francisella tularensis subsp. mediasiatica (strain FSC147).